Consider the following 353-residue polypeptide: Protein RecA (353 aa).

67–74 (GPESSGKT) serves as a coordination point for ATP.

This sequence belongs to the RecA family.

The protein resides in the cytoplasm. Its function is as follows. Can catalyze the hydrolysis of ATP in the presence of single-stranded DNA, the ATP-dependent uptake of single-stranded DNA by duplex DNA, and the ATP-dependent hybridization of homologous single-stranded DNAs. It interacts with LexA causing its activation and leading to its autocatalytic cleavage. This chain is Protein RecA, found in Salmonella agona (strain SL483).